The primary structure comprises 93 residues: YcgL domain-containing protein VSAL_I1068 (93 aa).

The 84-residue stretch at 1 to 84 (MYCSIYKSSK…PPENLLEKYK (84 aa)) folds into the YcgL domain.

The sequence is that of YcgL domain-containing protein VSAL_I1068 from Aliivibrio salmonicida (strain LFI1238) (Vibrio salmonicida (strain LFI1238)).